The chain runs to 258 residues: MSLKSSAKVALSLMDLTTLNDNATDEKVIALCQQGNTEFGTPAAVCVYPRFVPVARKALKAQQTEQVKIATVTNFPHGNDDIDIAVTETKAAIAYGADEVDVVFPYKALMAGNEQVGFELVKQCKAVCQASGVLLKVIIETGELKTPALIRKASELAIQAGADFIKTSTGKVAINATLESARIMLETIRDLNVAEKVGFKAAGGVKTTEEAEQYLALAKTILGEDWVNSAHFRFGASSLLNNLLATLNDQTAQVVTGY.

Catalysis depends on Asp-101, which acts as the Proton donor/acceptor. The active-site Schiff-base intermediate with acetaldehyde is Lys-166. Residue Lys-200 is the Proton donor/acceptor of the active site.

This sequence belongs to the DeoC/FbaB aldolase family. DeoC type 2 subfamily.

The protein resides in the cytoplasm. It carries out the reaction 2-deoxy-D-ribose 5-phosphate = D-glyceraldehyde 3-phosphate + acetaldehyde. Its pathway is carbohydrate degradation; 2-deoxy-D-ribose 1-phosphate degradation; D-glyceraldehyde 3-phosphate and acetaldehyde from 2-deoxy-alpha-D-ribose 1-phosphate: step 2/2. Catalyzes a reversible aldol reaction between acetaldehyde and D-glyceraldehyde 3-phosphate to generate 2-deoxy-D-ribose 5-phosphate. This chain is Deoxyribose-phosphate aldolase, found in Haemophilus ducreyi (strain 35000HP / ATCC 700724).